The following is a 578-amino-acid chain: V-type ATP synthase alpha chain (578 aa).

Residue 228–235 (GPFGSGKT) participates in ATP binding.

It belongs to the ATPase alpha/beta chains family.

The catalysed reaction is ATP + H2O + 4 H(+)(in) = ADP + phosphate + 5 H(+)(out). Its function is as follows. Produces ATP from ADP in the presence of a proton gradient across the membrane. The V-type alpha chain is a catalytic subunit. The chain is V-type ATP synthase alpha chain from Thermus thermophilus (strain ATCC BAA-163 / DSM 7039 / HB27).